We begin with the raw amino-acid sequence, 103 residues long: Large ribosomal subunit protein bL21 (103 aa).

The protein belongs to the bacterial ribosomal protein bL21 family. In terms of assembly, part of the 50S ribosomal subunit. Contacts protein L20.

This protein binds to 23S rRNA in the presence of protein L20. The protein is Large ribosomal subunit protein bL21 of Desulfitobacterium hafniense (strain DSM 10664 / DCB-2).